Here is a 242-residue protein sequence, read N- to C-terminus: MAPK-interacting and spindle-stabilizing protein-like (242 aa).

Disordered regions lie at residues 1–145 (MSDE…SLGP) and 192–242 (PPGA…HSYH). Position 2 is an N-acetylserine (serine 2). Residues serine 2, serine 6, and serine 15 each carry the phosphoserine modification. The segment covering 13-29 (EQSSAKPPAVTNTKAGH) has biased composition (polar residues). Positions 30 to 43 (SSQGWPGSSPWSNP) are enriched in low complexity. Composition is skewed to pro residues over residues 44-53 (SAPPAMPSGL) and 75-114 (SMPP…PGPT). The segment covering 192–210 (PPGAWGPAAPYPGPAGSYP) has biased composition (low complexity).

Belongs to the MISS family.

This chain is MAPK-interacting and spindle-stabilizing protein-like (Mapk1ip1l), found in Mus musculus (Mouse).